We begin with the raw amino-acid sequence, 424 residues long: Hemagglutinin-esterase (424 aa).

The first 16 residues, 1–16 (MFLLPRFILVSCIIGS), serve as a signal peptide directing secretion. The tract at residues 7 to 127 (FILVSCIIGS…SNDIWMQNKG (121 aa)) is esterase domain 1. Over 17 to 392 (LGFYNPPTNV…PICVYDPLPV (376 aa)) the chain is Virion surface. The active-site Nucleophile is the Ser40. A disulfide bond links Cys44 and Cys65. N-linked (GlcNAc...) asparagine; by host glycosylation is found at Asn54, Asn89, Asn114, Asn153, Asn236, and Asn301. Cystine bridges form between Cys113/Cys162, Cys197/Cys276, and Cys205/Cys249. The receptor binding stretch occupies residues 128 to 266 (LFYTQVYKNM…GNYLAISNEL (139 aa)). Residues 267–379 (LLTVPTKAIC…RCPTAADINN (113 aa)) are esterase domain 2. Cys307 and Cys312 are joined by a disulfide. Asn316 carries an N-linked (GlcNAc...) asparagine; by host glycan. Residues Asp326 and His329 each act as charge relay system in the active site. A disulfide bridge links Cys347 with Cys371. N-linked (GlcNAc...) asparagine; by host glycosylation occurs at Asn358. The helical transmembrane segment at 393-413 (ILLGILLGVAVIIIVVLLLYF) threads the bilayer. Over 414-424 (MVDNGTRLHDA) the chain is Intravirion. The N-linked (GlcNAc...) asparagine; by host glycan is linked to Asn417.

Belongs to the influenza type C/coronaviruses hemagglutinin-esterase family. In terms of assembly, homodimer; disulfide-linked. Forms a complex with the M protein in the pre-Golgi. Associates then with S-M complex to form a ternary complex S-M-HE. Post-translationally, N-glycosylated in the host RER.

Its subcellular location is the virion membrane. It localises to the host cell membrane. It catalyses the reaction N-acetyl-9-O-acetylneuraminate + H2O = N-acetylneuraminate + acetate + H(+). It carries out the reaction N-acetyl-4-O-acetylneuraminate + H2O = N-acetylneuraminate + acetate + H(+). Functionally, structural protein that makes short spikes at the surface of the virus. Contains receptor binding and receptor-destroying activities. Mediates de-O-acetylation of N-acetyl-4-O-acetylneuraminic acid, which is probably the receptor determinant recognized by the virus on the surface of erythrocytes and susceptible cells. This receptor-destroying activity is important for virus release as it probably helps preventing self-aggregation and ensures the efficient spread of the progeny virus from cell to cell. May serve as a secondary viral attachment protein for initiating infection, the spike protein being the major one. May become a target for both the humoral and the cellular branches of the immune system. The chain is Hemagglutinin-esterase from Homo sapiens (Human).